The chain runs to 327 residues: Annexin A8 (327 aa).

Annexin repeat units follow at residues 21-92 (FNPD…ALMY), 93-164 (PPYS…CLLQ), 177-249 (GLVL…TVVK), and 253-324 (NVHS…NLVG). Ca(2+)-binding residues include Met266, Gly268, Gly270, and Asp310.

This sequence belongs to the annexin family.

Its function is as follows. This protein is an anticoagulant protein that acts as an indirect inhibitor of the thromboplastin-specific complex, which is involved in the blood coagulation cascade. This chain is Annexin A8 (Anxa8), found in Mus musculus (Mouse).